A 68-amino-acid chain; its full sequence is Wasabi receptor toxin (68 aa).

The signal sequence occupies residues 1-21 (MKYFTLALTLLFLLLINPCKD). The propeptide occupies 22 to 35 (MNFAWAESSEKVER). Intrachain disulfides connect Cys44/Cys62 and Cys48/Cys58.

This sequence belongs to the short scorpion toxin superfamily. Potassium channel inhibitor kappa-KTx family. Kappa-KTx 1 subfamily. Monomer. Expressed by the venom gland.

Its subcellular location is the secreted. The protein resides in the host cytoplasm. In terms of biological role, cell-penetrating peptide (CPP) with defensive purpose that induces pain by specifically activating mammalian sensory neuron TRPA1 channels. It non-covalently binds to the same region than other TRPA1 agonists (irritants), but acts via a distinct biochemical mechanism. Its binding stabilizes the TRPA1 open state and diminishes calcium-permeability. Consequently, it produces pain and pain hypersensitivity, but fails to trigger efferent release of neuropeptides (CGRP) and neurogenic inflammation typically produced by noxious electrophiles. Is not active on voltage-gated potassium channels and other TRP channels. This is Wasabi receptor toxin from Urodacus manicatus (Black rock scorpion).